Reading from the N-terminus, the 188-residue chain is Phosphoribosylglycinamide formyltransferase (188 aa).

12-14 lines the N(1)-(5-phospho-beta-D-ribosyl)glycinamide pocket; it reads GSN. Residues K66, 91-94, and N108 contribute to the (6R)-10-formyltetrahydrofolate site; that span reads MRLV. The Proton donor role is filled by H110.

The protein belongs to the GART family.

The catalysed reaction is N(1)-(5-phospho-beta-D-ribosyl)glycinamide + (6R)-10-formyltetrahydrofolate = N(2)-formyl-N(1)-(5-phospho-beta-D-ribosyl)glycinamide + (6S)-5,6,7,8-tetrahydrofolate + H(+). It participates in purine metabolism; IMP biosynthesis via de novo pathway; N(2)-formyl-N(1)-(5-phospho-D-ribosyl)glycinamide from N(1)-(5-phospho-D-ribosyl)glycinamide (10-formyl THF route): step 1/1. Its function is as follows. Catalyzes the transfer of a formyl group from 10-formyltetrahydrofolate to 5-phospho-ribosyl-glycinamide (GAR), producing 5-phospho-ribosyl-N-formylglycinamide (FGAR) and tetrahydrofolate. This is Phosphoribosylglycinamide formyltransferase from Staphylococcus epidermidis (strain ATCC 35984 / DSM 28319 / BCRC 17069 / CCUG 31568 / BM 3577 / RP62A).